A 256-amino-acid chain; its full sequence is Phosphatidylglycerol--prolipoprotein diacylglyceryl transferase (256 aa).

3 helical membrane passes run 19–39, 56–76, and 91–111; these read VHWY…LGYW, LIFY…MLFY, and IWEG…AAWL. Arg139 contacts a 1,2-diacyl-sn-glycero-3-phospho-(1'-sn-glycerol). A helical membrane pass occupies residues 231–251; the sequence is FGWLTMGQVLSIPMLLIGIWL.

It belongs to the Lgt family.

It localises to the cell inner membrane. It catalyses the reaction L-cysteinyl-[prolipoprotein] + a 1,2-diacyl-sn-glycero-3-phospho-(1'-sn-glycerol) = an S-1,2-diacyl-sn-glyceryl-L-cysteinyl-[prolipoprotein] + sn-glycerol 1-phosphate + H(+). The protein operates within protein modification; lipoprotein biosynthesis (diacylglyceryl transfer). Catalyzes the transfer of the diacylglyceryl group from phosphatidylglycerol to the sulfhydryl group of the N-terminal cysteine of a prolipoprotein, the first step in the formation of mature lipoproteins. The polypeptide is Phosphatidylglycerol--prolipoprotein diacylglyceryl transferase (Legionella pneumophila subsp. pneumophila (strain Philadelphia 1 / ATCC 33152 / DSM 7513)).